We begin with the raw amino-acid sequence, 1806 residues long: Non-reducing polyketide synthase pks12 (1806 aa).

The region spanning 30 to 191 (TDTMSGMISL…TKLHLRGKVH (162 aa)) is the Starter acyltransferase (SAT) domain. A Ketosynthase family 3 (KS3) domain is found at 330–755 (ENAIAIVGAG…GSNSALICGE (426 aa)). Residues Cys-504, His-639, and His-678 each act as for beta-ketoacyl synthase activity in the active site. Residues 860 to 1156 (LAFSGQSKQT…HNPSQHTFLG (297 aa)) form a malonyl-CoA:ACP transacylase (MAT) domain region. In terms of domain architecture, Malonyl-CoA:ACP transacylase (MAT) spans 862 to 1147 (FSGQSKQTIG…IIPMVKRATH (286 aa)). Ser-947 serves as the catalytic For acyl/malonyl transferase activity. An N-terminal hotdog fold region spans residues 1249–1383 (PQTPPLKLVT…GRFSVTSHID (135 aa)). In terms of domain architecture, PKS/mFAS DH spans 1249–1558 (PQTPPLKLVT…FSRFPIAKLE (310 aa)). Residues 1249–1558 (PQTPPLKLVT…FSRFPIAKLE (310 aa)) are product template (PT) domain. His-1288 serves as the catalytic Proton acceptor; for dehydratase activity. Residues 1404–1558 (SERLMAGRAY…FSRFPIAKLE (155 aa)) are C-terminal hotdog fold. Asp-1468 acts as the Proton donor; for dehydratase activity in catalysis. In terms of domain architecture, Carrier spans 1727–1804 (QSKLRIRQRI…ELVDYVVISS (78 aa)). Ser-1764 carries the O-(pantetheine 4'-phosphoryl)serine modification.

Requires pantetheine 4'-phosphate as cofactor.

It participates in secondary metabolite biosynthesis. Non-reducing polyketide synthase; part of the gene cluster that mediates the biosynthesis of mitorubrinol and mitorubrinic acid, two virulence factors that improve T.marneffei intracellular survival in macrophages. The two polyketide synthases pks12 and pks11 are probably responsible for sequential use in the biosynthesis of mitorubrinol and mitorubrinic acid. The first part of the biosynthesis is probably catalyzed by pks12, which synthesized orsellinic acid. This tetraketide is then used as a starter unit for pks11, which possesses a SAT domain, in the second part of the biosynthesis. Pks11, contains a methyltransferase domain, also served that methylates the products, using a methyl group from S-adenosylmethionine. This Talaromyces marneffei (Penicillium marneffei) protein is Non-reducing polyketide synthase pks12.